Reading from the N-terminus, the 259-residue chain is Aliphatic sulfonates import ATP-binding protein SsuB 2 (259 aa).

An ABC transporter domain is found at 17–238; it reads LDILGLWKGF…VRSSQAFTSI (222 aa). 49 to 56 is a binding site for ATP; that stretch reads GRSGCGKS.

This sequence belongs to the ABC transporter superfamily. Aliphatic sulfonates importer (TC 3.A.1.17.2) family. As to quaternary structure, the complex is composed of two ATP-binding proteins (SsuB), two transmembrane proteins (SsuC) and a solute-binding protein (SsuA).

The protein localises to the cell inner membrane. The enzyme catalyses ATP + H2O + aliphatic sulfonate-[sulfonate-binding protein]Side 1 = ADP + phosphate + aliphatic sulfonateSide 2 + [sulfonate-binding protein]Side 1.. Its function is as follows. Part of the ABC transporter complex SsuABC involved in aliphatic sulfonates import. Responsible for energy coupling to the transport system. The sequence is that of Aliphatic sulfonates import ATP-binding protein SsuB 2 from Agrobacterium fabrum (strain C58 / ATCC 33970) (Agrobacterium tumefaciens (strain C58)).